A 390-amino-acid polypeptide reads, in one-letter code: Olfactomedin-like protein 3A (390 aa).

Positions 1 to 17 are cleaved as a signal peptide; sequence MRALQLLVLVLSGLVGA. A coiled-coil region spans residues 18–91; it reads QQQALMDYLE…RVDRVEREMD (74 aa). The Olfactomedin-like domain maps to 130–386; that stretch reads DCSDMISSIK…QILYKLQLKK (257 aa). Residues C131 and C313 are joined by a disulfide bond. N169 carries N-linked (GlcNAc...) asparagine glycosylation.

This sequence belongs to the OLFML3 family.

It is found in the secreted. Its function is as follows. Secreted scaffold protein that plays an essential role in dorsoventral patterning during early development. Stabilizes axial formation by restricting chordin (CHRD) activity on the dorsal side. Acts by facilitating the association between the tolloid proteases and their substrate chordin (CHRD), leading to enhance chordin (CHRD) degradation. The polypeptide is Olfactomedin-like protein 3A (olfml3a) (Danio rerio (Zebrafish)).